A 379-amino-acid polypeptide reads, in one-letter code: MSNKQAVLKLISKRWISTVQRADFKLNSEALHSNATVFSMIQPTGCFHLGNYLGATRVWTDLCELKQPGQELIFGVADLHAITVPKPDGEMFRKFRHEAVASILAVGVDPEKASVIYQSAIPQHSELHWLLSTLASMGLLNRMTQWKSKSNIKQSTNGDYLVNDSDVGKVRLGLFSYPVLQAADILLYKSTHVPVGDDQSQHLELTRHLAEKFNKMYKKNFFPKPVTMLAQTKKVLSLSTPEKKMSKSDPNHDSVIFLNDEPKAIQKKIRKALTDSISDRFYYDPVERPGVSNLINIVSGIQRKSIEDVVEDVSRFNNYRDFKDYVSEVIIEELKGPRTEFEKYINEPTYLHSVVESGMRKAREKAAKNLADIHKIMGF.

ATP contacts are provided by residues glutamine 42 and 48 to 51 (HLGN). A 'HIGH' region motif is present at residues 43 to 51 (PTGCFHLGN). Residue aspartate 184 participates in L-tryptophan binding. Residues 196 to 198 (GDD), valine 235, 244 to 248 (KMSKS), and lysine 247 contribute to the ATP site. Positions 244-248 (KMSKS) match the 'KMSKS' region motif.

Belongs to the class-I aminoacyl-tRNA synthetase family. As to quaternary structure, homodimer.

It is found in the mitochondrion matrix. The enzyme catalyses tRNA(Trp) + L-tryptophan + ATP = L-tryptophyl-tRNA(Trp) + AMP + diphosphate + H(+). Mitochondrial aminoacyl-tRNA synthetase that catalyzes the attachment of tryptophan to tRNA(Trp). This chain is Tryptophan--tRNA ligase, mitochondrial (MSW1), found in Saccharomyces cerevisiae (strain ATCC 204508 / S288c) (Baker's yeast).